The primary structure comprises 1192 residues: DNA topoisomerase 2 (1192 aa).

Residues Asn-64, Asn-95, and 142–149 (GTNGVGLK) contribute to the ATP site. 3 residues coordinate Mg(2+): Glu-438, Asp-539, and Asp-541. The region spanning 707–1174 (IPNFLDGMTR…PGASVWLEEI (468 aa)) is the Topo IIA-type catalytic domain. Tyr-800 serves as the catalytic O-(5'-phospho-DNA)-tyrosine intermediate.

This sequence belongs to the type II topoisomerase family. Requires Mg(2+) as cofactor. The cofactor is Mn(2+). Ca(2+) is required as a cofactor.

The protein resides in the host cytoplasm. The enzyme catalyses ATP-dependent breakage, passage and rejoining of double-stranded DNA.. Its function is as follows. Type II topoisomerase. Processively relaxes supercoiled DNA. Displays DNA-supercoiling activity only when associated with the viral histone-like protein. This is DNA topoisomerase 2 from Ornithodoros (relapsing fever ticks).